Reading from the N-terminus, the 208-residue chain is RNA chaperone ProQ (208 aa).

2 stretches are compositionally biased toward basic and acidic residues: residues 99 to 115 (AQETLKESKAKVAEKNK) and 126 to 135 (PAKDKPENTA). The disordered stretch occupies residues 99–149 (AQETLKESKAKVAEKNKATNKAAAKKAPAKDKPENTAKAKPKTAKKPAKPK). Residues 137 to 149 (AKPKTAKKPAKPK) are compositionally biased toward basic residues.

Belongs to the ProQ family.

Its subcellular location is the cytoplasm. Functionally, RNA chaperone with significant RNA binding, RNA strand exchange and RNA duplexing activities. This is RNA chaperone ProQ from Idiomarina loihiensis (strain ATCC BAA-735 / DSM 15497 / L2-TR).